A 246-amino-acid polypeptide reads, in one-letter code: tRNA pseudouridine synthase A (246 aa).

The active-site Nucleophile is Asp52. Residue Tyr111 participates in substrate binding.

Belongs to the tRNA pseudouridine synthase TruA family. In terms of assembly, homodimer.

The enzyme catalyses uridine(38/39/40) in tRNA = pseudouridine(38/39/40) in tRNA. Functionally, formation of pseudouridine at positions 38, 39 and 40 in the anticodon stem and loop of transfer RNAs. This is tRNA pseudouridine synthase A from Parvibaculum lavamentivorans (strain DS-1 / DSM 13023 / NCIMB 13966).